Here is a 394-residue protein sequence, read N- to C-terminus: F-box protein At2g17830 (394 aa).

One can recognise an F-box domain in the interval 1-47 (MAIMSDLPRDLLAEILSRVPLASLRSVRFTCKKWNDLSKDRSFLKKQ).

The chain is F-box protein At2g17830 from Arabidopsis thaliana (Mouse-ear cress).